Here is a 545-residue protein sequence, read N- to C-terminus: Methionine--tRNA ligase (545 aa).

The 'HIGH' region motif lies at 13–23 (PYANGPLHIGH). Residues Cys-144, Cys-147, Cys-157, and Cys-160 each coordinate Zn(2+). The 'KMSKS' region signature appears at 330–334 (KISKS). Residue Lys-333 participates in ATP binding.

Belongs to the class-I aminoacyl-tRNA synthetase family. MetG type 1 subfamily. Monomer. Zn(2+) serves as cofactor.

The protein localises to the cytoplasm. The catalysed reaction is tRNA(Met) + L-methionine + ATP = L-methionyl-tRNA(Met) + AMP + diphosphate. Its function is as follows. Is required not only for elongation of protein synthesis but also for the initiation of all mRNA translation through initiator tRNA(fMet) aminoacylation. The protein is Methionine--tRNA ligase of Blochmanniella floridana.